The following is a 481-amino-acid chain: Glutamate--tRNA ligase (481 aa).

The 'HIGH' region signature appears at 9–19 (PSPTGNLHIGT). 4 residues coordinate Zn(2+): Cys-98, Cys-100, His-125, and Asp-127. The 'KMSKS' region signature appears at 248–252 (KLSKR). Residue Lys-251 participates in ATP binding.

The protein belongs to the class-I aminoacyl-tRNA synthetase family. Glutamate--tRNA ligase type 1 subfamily. As to quaternary structure, monomer. Zn(2+) serves as cofactor.

It localises to the cytoplasm. The enzyme catalyses tRNA(Glu) + L-glutamate + ATP = L-glutamyl-tRNA(Glu) + AMP + diphosphate. Functionally, catalyzes the attachment of glutamate to tRNA(Glu) in a two-step reaction: glutamate is first activated by ATP to form Glu-AMP and then transferred to the acceptor end of tRNA(Glu). The sequence is that of Glutamate--tRNA ligase from Synechococcus elongatus (strain ATCC 33912 / PCC 7942 / FACHB-805) (Anacystis nidulans R2).